The following is a 622-amino-acid chain: SLAIN motif-containing protein-like (622 aa).

Residues 34–60 (DLKEVQKLHELVKRLEIQNQQLKIKRN) are a coiled coil. 2 disordered regions span residues 404–441 (HRYS…IQNH) and 473–622 (VRSS…DGCY). The segment covering 405-415 (RYSPSPLSSPR) has biased composition (low complexity). Polar residues-rich tracts occupy residues 416–430 (CQSP…TTSR), 484–502 (QGPS…STPP), 525–591 (VSTS…STVP), and 599–611 (SRRS…MNST).

Belongs to the SLAIN motif-containing family.

The polypeptide is SLAIN motif-containing protein-like (Xenopus tropicalis (Western clawed frog)).